The following is a 120-amino-acid chain: Small ribosomal subunit protein uS12 (120 aa).

D88 carries the 3-methylthioaspartic acid modification.

It belongs to the universal ribosomal protein uS12 family. As to quaternary structure, part of the 30S ribosomal subunit. Contacts proteins S8 and S17. May interact with IF1 in the 30S initiation complex.

With S4 and S5 plays an important role in translational accuracy. Functionally, interacts with and stabilizes bases of the 16S rRNA that are involved in tRNA selection in the A site and with the mRNA backbone. Located at the interface of the 30S and 50S subunits, it traverses the body of the 30S subunit contacting proteins on the other side and probably holding the rRNA structure together. The combined cluster of proteins S8, S12 and S17 appears to hold together the shoulder and platform of the 30S subunit. The protein is Small ribosomal subunit protein uS12 of Carsonella ruddii (strain PV).